A 159-amino-acid polypeptide reads, in one-letter code: 2-C-methyl-D-erythritol 2,4-cyclodiphosphate synthase (159 aa).

Positions 8 and 10 each coordinate a divalent metal cation. 4-CDP-2-C-methyl-D-erythritol 2-phosphate-binding positions include 8 to 10 (DVH) and 34 to 35 (HS). Residue histidine 42 coordinates a divalent metal cation. 4-CDP-2-C-methyl-D-erythritol 2-phosphate-binding positions include 56–58 (DIG), 61–65 (FPDTD), 100–106 (AQAPRML), 132–135 (TTTE), phenylalanine 139, and arginine 142.

Belongs to the IspF family. Homotrimer. A divalent metal cation is required as a cofactor.

It catalyses the reaction 4-CDP-2-C-methyl-D-erythritol 2-phosphate = 2-C-methyl-D-erythritol 2,4-cyclic diphosphate + CMP. Its pathway is isoprenoid biosynthesis; isopentenyl diphosphate biosynthesis via DXP pathway; isopentenyl diphosphate from 1-deoxy-D-xylulose 5-phosphate: step 4/6. In terms of biological role, involved in the biosynthesis of isopentenyl diphosphate (IPP) and dimethylallyl diphosphate (DMAPP), two major building blocks of isoprenoid compounds. Catalyzes the conversion of 4-diphosphocytidyl-2-C-methyl-D-erythritol 2-phosphate (CDP-ME2P) to 2-C-methyl-D-erythritol 2,4-cyclodiphosphate (ME-CPP) with a corresponding release of cytidine 5-monophosphate (CMP). The sequence is that of 2-C-methyl-D-erythritol 2,4-cyclodiphosphate synthase from Escherichia coli O6:K15:H31 (strain 536 / UPEC).